The sequence spans 160 residues: Major allergen Pru av 1 (160 aa).

It belongs to the BetVI family.

The protein is Major allergen Pru av 1 (PRUA1) of Prunus avium (Cherry).